A 257-amino-acid polypeptide reads, in one-letter code: Imidazole glycerol phosphate synthase subunit HisF (257 aa).

Residues D12 and D131 contribute to the active site.

The protein belongs to the HisA/HisF family. As to quaternary structure, heterodimer of HisH and HisF.

The protein resides in the cytoplasm. The enzyme catalyses 5-[(5-phospho-1-deoxy-D-ribulos-1-ylimino)methylamino]-1-(5-phospho-beta-D-ribosyl)imidazole-4-carboxamide + L-glutamine = D-erythro-1-(imidazol-4-yl)glycerol 3-phosphate + 5-amino-1-(5-phospho-beta-D-ribosyl)imidazole-4-carboxamide + L-glutamate + H(+). It functions in the pathway amino-acid biosynthesis; L-histidine biosynthesis; L-histidine from 5-phospho-alpha-D-ribose 1-diphosphate: step 5/9. In terms of biological role, IGPS catalyzes the conversion of PRFAR and glutamine to IGP, AICAR and glutamate. The HisF subunit catalyzes the cyclization activity that produces IGP and AICAR from PRFAR using the ammonia provided by the HisH subunit. This Burkholderia thailandensis (strain ATCC 700388 / DSM 13276 / CCUG 48851 / CIP 106301 / E264) protein is Imidazole glycerol phosphate synthase subunit HisF.